A 255-amino-acid chain; its full sequence is 5'-nucleotidase SurE (255 aa).

Positions 8, 9, 39, and 95 each coordinate a divalent metal cation.

The protein belongs to the SurE nucleotidase family. Requires a divalent metal cation as cofactor.

The protein resides in the cytoplasm. The catalysed reaction is a ribonucleoside 5'-phosphate + H2O = a ribonucleoside + phosphate. Its function is as follows. Nucleotidase that shows phosphatase activity on nucleoside 5'-monophosphates. This chain is 5'-nucleotidase SurE, found in Thermosipho melanesiensis (strain DSM 12029 / CIP 104789 / BI429).